Here is a 558-residue protein sequence, read N- to C-terminus: Factor VII-activating protease (558 aa).

Residues 1–23 (MFARMSDLHVLLLMVLAGKTAFG) form the signal peptide. N-linked (GlcNAc...) asparagine glycosylation is present at Asn-54. 3 consecutive EGF-like domains span residues 71 to 107 (EDDP…NRCQ), 109 to 146 (VQNK…SDCS), and 148 to 186 (VVPV…KLCE). 18 cysteine pairs are disulfide-bonded: Cys-75/Cys-86, Cys-80/Cys-95, Cys-97/Cys-106, Cys-113/Cys-123, Cys-118/Cys-134, Cys-136/Cys-145, Cys-152/Cys-163, Cys-157/Cys-174, Cys-176/Cys-185, Cys-192/Cys-274, Cys-213/Cys-255, Cys-244/Cys-269, Cys-299/Cys-433, Cys-345/Cys-361, Cys-353/Cys-422, Cys-445/Cys-513, Cys-475/Cys-491, and Cys-503/Cys-531. The Kringle domain maps to 191-274 (DCYVDDGYSY…KWEYCDVPAC (84 aa)). In terms of domain architecture, Peptidase S1 spans 312-553 (IFGGFKSTAG…FLTWIKATME (242 aa)). Residues His-360 and Asp-409 each act as charge relay system in the active site. Ser-507 (charge relay system) is an active-site residue.

It belongs to the peptidase S1 family. In terms of assembly, heterodimer; disulfide-linked. Heterodimer of a 50 kDa heavy and a 27 kDa light chain linked by a disulfide bond. In terms of processing, proteolytic cleavage at Gly-23 or Leu-27 can give rise to the 50 kDa heavy chain (HC) and cleavage at Arg-311 or Lys-317 can give rise to the 27 kDa light chain (LC). The HC can undergo further proteolytic cleavage giving rise to a 26 kDa fragment. The LC can undergo further proteolytic cleavage at Arg-311 leading to a 17-kDa fragment and at Arg-478 leading to a 8-kDa fragment.

Its subcellular location is the secreted. In terms of biological role, cleaves the alpha-chain at multiple sites and the beta-chain between 'Lys-53' and 'Lys-54' but not the gamma-chain of fibrinogen and therefore does not initiate the formation of the fibrin clot and does not cause the fibrinolysis directly. It does not cleave (activate) prothrombin and plasminogen but converts the inactive single chain urinary plasminogen activator (pro-urokinase) to the active two chain form. Activates coagulation factor VII. May function as a tumor suppressor negatively regulating cell proliferation and cell migration. This chain is Factor VII-activating protease (HABP2), found in Bos taurus (Bovine).